The sequence spans 91 residues: Small ribosomal subunit protein uS19 (91 aa).

This sequence belongs to the universal ribosomal protein uS19 family.

Protein S19 forms a complex with S13 that binds strongly to the 16S ribosomal RNA. This is Small ribosomal subunit protein uS19 from Bordetella petrii (strain ATCC BAA-461 / DSM 12804 / CCUG 43448).